A 220-amino-acid chain; its full sequence is Peptide methionine sulfoxide reductase MsrA (220 aa).

Cys52 is a catalytic residue.

The protein belongs to the MsrA Met sulfoxide reductase family.

It catalyses the reaction L-methionyl-[protein] + [thioredoxin]-disulfide + H2O = L-methionyl-(S)-S-oxide-[protein] + [thioredoxin]-dithiol. The catalysed reaction is [thioredoxin]-disulfide + L-methionine + H2O = L-methionine (S)-S-oxide + [thioredoxin]-dithiol. Has an important function as a repair enzyme for proteins that have been inactivated by oxidation. Catalyzes the reversible oxidation-reduction of methionine sulfoxide in proteins to methionine. The polypeptide is Peptide methionine sulfoxide reductase MsrA (Corynebacterium diphtheriae (strain ATCC 700971 / NCTC 13129 / Biotype gravis)).